A 422-amino-acid polypeptide reads, in one-letter code: UDP-N-acetylmuramoylalanine--D-glutamate ligase (422 aa).

Residue 102–108 participates in ATP binding; the sequence is GTNGKTT.

It belongs to the MurCDEF family.

The protein localises to the cytoplasm. The catalysed reaction is UDP-N-acetyl-alpha-D-muramoyl-L-alanine + D-glutamate + ATP = UDP-N-acetyl-alpha-D-muramoyl-L-alanyl-D-glutamate + ADP + phosphate + H(+). Its pathway is cell wall biogenesis; peptidoglycan biosynthesis. In terms of biological role, cell wall formation. Catalyzes the addition of glutamate to the nucleotide precursor UDP-N-acetylmuramoyl-L-alanine (UMA). The polypeptide is UDP-N-acetylmuramoylalanine--D-glutamate ligase (Helicobacter pylori (strain J99 / ATCC 700824) (Campylobacter pylori J99)).